Here is a 577-residue protein sequence, read N- to C-terminus: Multidrug transporter TPO1_2 (577 aa).

The disordered stretch occupies residues 1–63; that stretch reads MSSTSSDRPY…ALSKNSTQTS (63 aa). N-linked (GlcNAc...) asparagine glycosylation is found at Asn-44 and Asn-58. A run of 12 helical transmembrane segments spans residues 137 to 157, 167 to 187, 204 to 224, 234 to 254, 263 to 283, 293 to 313, 368 to 388, 406 to 426, 446 to 466, 475 to 495, 504 to 526, and 541 to 561; these read VMLC…SSIF, IYHV…LGFA, GVLV…ATAK, FFAG…FADM, AICL…VIGS, WLEY…LFFF, PLLL…YLLL, ELPY…IWWM, LLPM…FCWT, WIVP…IFLP, YLLI…GAAF, and YAGL…LLFL.

This sequence belongs to the major facilitator superfamily. DHA1 family. Polyamines/proton antiporter (TC 2.A.1.2.16) subfamily.

It is found in the cell membrane. In terms of biological role, multidrug resistance transporter involved in resistance to azole antifungal drugs such as the imidazoles miconazole, ketoconazole, and tioconazole; as well as the triazoles itraconazole and fluconazole. Also plays a role in the resistance to other antifungal drug families such as the polyene amphotericin B, the pyrimide analog flucytosine, the fungicide mancozeb, and the polyamine spermine. Decreases the intracellular accumulation of clotrimazole by mediating its extrusion from cells. Plays a role in biofilm formation. This Candida glabrata (strain ATCC 2001 / BCRC 20586 / JCM 3761 / NBRC 0622 / NRRL Y-65 / CBS 138) (Yeast) protein is Multidrug transporter TPO1_2.